The chain runs to 239 residues: Putative CCR4-associated factor 1 homolog 8 (239 aa).

The a divalent metal cation site is built by Asp17, Glu19, Asp133, and Asn204.

The protein belongs to the CAF1 family. In terms of assembly, component of the CCR4-NOT complex, at least composed of CRR4 and CAF1 proteins. It depends on a divalent metal cation as a cofactor.

It localises to the nucleus. Its subcellular location is the cytoplasm. It carries out the reaction Exonucleolytic cleavage of poly(A) to 5'-AMP.. Functionally, ubiquitous transcription factor required for a diverse set of processes. It is a component of the CCR4 complex involved in the control of gene expression. This is Putative CCR4-associated factor 1 homolog 8 (CAF1-8) from Arabidopsis thaliana (Mouse-ear cress).